The sequence spans 387 residues: Fructose-1,6-bisphosphate aldolase/phosphatase (387 aa).

Asp-13 functions as the Proton acceptor; for FBP phosphatase activity in the catalytic mechanism. Mg(2+)-binding residues include Asp-13, His-20, Asp-54, and Asp-55. His-20 is a binding site for beta-D-fructose 1,6-bisphosphate. His-20 provides a ligand contact to dihydroxyacetone phosphate. Tyr-92 lines the beta-D-fructose 1,6-bisphosphate pocket. Residue Gln-96 coordinates Mg(2+). Beta-D-fructose 1,6-bisphosphate is bound at residue 105–106 (GN). Residue Asp-133 participates in Mg(2+) binding. Lys-134 contacts beta-D-fructose 1,6-bisphosphate. Lys-134 provides a ligand contact to dihydroxyacetone phosphate. The active-site Proton donor/acceptor; for FBP aldolase activity is the Tyr-229. Residues Lys-232, Asp-233, and Asp-234 each coordinate Mg(2+). Lys-232 (schiff-base intermediate with DHAP; for FBP aldolase activity) is an active-site residue. Residues 242–243 (QS), Arg-266, Asp-287, and Tyr-348 each bind beta-D-fructose 1,6-bisphosphate. Arg-266 and Asp-287 together coordinate dihydroxyacetone phosphate.

The protein belongs to the FBP aldolase/phosphatase family. In terms of assembly, homooctamer; dimer of tetramers. Mg(2+) serves as cofactor.

It carries out the reaction beta-D-fructose 1,6-bisphosphate + H2O = beta-D-fructose 6-phosphate + phosphate. The enzyme catalyses beta-D-fructose 1,6-bisphosphate = D-glyceraldehyde 3-phosphate + dihydroxyacetone phosphate. It participates in carbohydrate biosynthesis; gluconeogenesis. Functionally, catalyzes two subsequent steps in gluconeogenesis: the aldol condensation of dihydroxyacetone phosphate (DHAP) and glyceraldehyde-3-phosphate (GA3P) to fructose-1,6-bisphosphate (FBP), and the dephosphorylation of FBP to fructose-6-phosphate (F6P). The sequence is that of Fructose-1,6-bisphosphate aldolase/phosphatase from Ignicoccus hospitalis (strain KIN4/I / DSM 18386 / JCM 14125).